The sequence spans 114 residues: FK506-binding protein 1 (114 aa).

The region spanning 26 to 114 is the PPIase FKBP-type domain; sequence GDLVTIHYTG…VFDVELLKIN (89 aa).

This sequence belongs to the FKBP-type PPIase family. FKBP1 subfamily.

The protein localises to the cytoplasm. It catalyses the reaction [protein]-peptidylproline (omega=180) = [protein]-peptidylproline (omega=0). Its activity is regulated as follows. Inhibited by both FK506 and rapamycin. Functionally, PPIases accelerate the folding of proteins. It catalyzes the cis-trans isomerization of proline imidic peptide bonds in oligopeptides. The chain is FK506-binding protein 1 (FPR1) from Kluyveromyces lactis (strain ATCC 8585 / CBS 2359 / DSM 70799 / NBRC 1267 / NRRL Y-1140 / WM37) (Yeast).